A 417-amino-acid polypeptide reads, in one-letter code: Putative F-box protein At4g21240 (417 aa).

Positions 1 to 12 (MDRREEEEEETG) are enriched in acidic residues. Residues 1–25 (MDRREEEEEETGYGEKGTRNQSKED) form a disordered region. A compositionally biased stretch (basic and acidic residues) spans 16–25 (KGTRNQSKED). The 47-residue stretch at 30–76 (GKIFELIPLDMIPDILLRLPAKSAVRFRIVSKLWLSITTRPYFIRSF) folds into the F-box domain.

The chain is Putative F-box protein At4g21240 from Arabidopsis thaliana (Mouse-ear cress).